Consider the following 329-residue polypeptide: Biotin synthase (329 aa).

Positions 36 to 260 constitute a Radical SAM core domain; the sequence is GEIQLCTLLS…VAVARITMPK (225 aa). The [4Fe-4S] cluster site is built by Cys51, Cys55, and Cys58. [2Fe-2S] cluster is bound by residues Cys95, Cys126, Cys186, and Arg264.

It belongs to the radical SAM superfamily. Biotin synthase family. In terms of assembly, homodimer. Requires [4Fe-4S] cluster as cofactor. [2Fe-2S] cluster serves as cofactor.

It catalyses the reaction (4R,5S)-dethiobiotin + (sulfur carrier)-SH + 2 reduced [2Fe-2S]-[ferredoxin] + 2 S-adenosyl-L-methionine = (sulfur carrier)-H + biotin + 2 5'-deoxyadenosine + 2 L-methionine + 2 oxidized [2Fe-2S]-[ferredoxin]. Its pathway is cofactor biosynthesis; biotin biosynthesis; biotin from 7,8-diaminononanoate: step 2/2. Functionally, catalyzes the conversion of dethiobiotin (DTB) to biotin by the insertion of a sulfur atom into dethiobiotin via a radical-based mechanism. In Sphingopyxis alaskensis (strain DSM 13593 / LMG 18877 / RB2256) (Sphingomonas alaskensis), this protein is Biotin synthase.